We begin with the raw amino-acid sequence, 179 residues long: Lebocin-1/2 (179 aa).

An N-terminal signal peptide occupies residues 1–16; that stretch reads MYKFLVFSSVLVLFFA. Positions 17-120 are excised as a propeptide; sequence QASCQRFIQP…QPIESHRNTR (104 aa). The tract at residues 93–116 is disordered; sequence NNEASIEHSHHTVDTGLDQPIESH. Threonine 135 carries O-linked (GalNAc...) threonine glycosylation. A propeptide spanning residues 153 to 179 is cleaved from the precursor; that stretch reads RRHASDDQEELRQYNEHFLIPRDIFQE.

It belongs to the lebocin family. In terms of processing, O-glycosylation is important for the antibacterial activity of lebocin, O-linked glycan structure is a disaccharide (Gal-GalNAc) in case of lebocin 1 and a monosaccharide (GalNAc) in case of lebocin 2. As to expression, hemolymph. Produced in fat body.

It is found in the secreted. Its function is as follows. Antibacterial peptide. This Bombyx mori (Silk moth) protein is Lebocin-1/2.